Consider the following 439-residue polypeptide: SET domain-containing protein 4 (439 aa).

Residues 1–19 (MQRRRGRTERARKRRRRSS) show a composition bias toward basic residues. Residues 1-25 (MQRRRGRTERARKRRRRSSGSRAVN) are disordered. Residues 47-272 (TDLVPASFPG…KHQEVFICYG (226 aa)) enclose the SET domain. Y271 serves as a coordination point for S-adenosyl-L-methionine.

It belongs to the class V-like SAM-binding methyltransferase superfamily. SETD4 family. In terms of assembly, forms a ternary complex with TBK1 and ZNF268; the interaction with TBK1 is ZNF268-dependent and leads to TBK1 monomethylation. Expressed in the forebrain subventricular zone, in quiescent neural stem cells.

The protein resides in the cytoplasm. It is found in the cytosol. The protein localises to the nucleus. The enzyme catalyses L-lysyl(4)-[histone H3] + S-adenosyl-L-methionine = N(6)-methyl-L-lysyl(4)-[histone H3] + S-adenosyl-L-homocysteine + H(+). It carries out the reaction N(6)-methyl-L-lysyl(4)-[histone H3] + S-adenosyl-L-methionine = N(6),N(6)-dimethyl-L-lysyl(4)-[histone H3] + S-adenosyl-L-homocysteine + H(+). It catalyses the reaction L-lysyl(20)-[histone H4] + S-adenosyl-L-methionine = N(6)-methyl-L-lysyl(20)-[histone H4] + S-adenosyl-L-homocysteine + H(+). The catalysed reaction is N(6)-methyl-L-lysyl(20)-[histone H4] + S-adenosyl-L-methionine = N(6),N(6)-dimethyl-L-lysyl(20)-[histone H4] + S-adenosyl-L-homocysteine + H(+). The enzyme catalyses N(6),N(6)-dimethyl-L-lysyl(20)-[histone H4] + S-adenosyl-L-methionine = N(6),N(6),N(6)-trimethyl-L-lysyl(20)-[histone H4] + S-adenosyl-L-homocysteine + H(+). It carries out the reaction L-lysyl-[protein] + S-adenosyl-L-methionine = N(6)-methyl-L-lysyl-[protein] + S-adenosyl-L-homocysteine + H(+). Protein-lysine N-methyltransferase that methylates both histones and non-histone proteins. Via its catalytic activity, regulates many processes, including cell proliferation, cell differentiation, inflammatory response and apoptosis. Regulates the inflammatory response by mediating mono- and dimethylation of 'Lys-4' of histone H3 (H3K4me1 and H3K4me2, respectively), leading to activate the transcription of pro-inflammatory cytokines IL6 and TNF-alpha. Also involved in the regulation of stem cell quiescence by catalyzing the trimethylation of 'Lys-20' of histone H4 (H4K20me3), thereby promoting heterochromatin formation. In the brain, epigenetically controls quiescence of neural stem cells for sustaining a protected neural stem cell population and maintaining a stem cell reservoir for neurogenesis. Involved in proliferation, migration, paracrine and myogenic differentiation of bone marrow mesenchymal stem cells (BMSCs). Through the catalysis of XRCC5/Ku70 trimethylation, regulates BAX-mediated apoptosis. SETD4-catalyzed XRCC5 methylation results in XRCC5 translocation to the cytoplasm, where it interacts with BAX, sequestering it from the mitochondria, hence preventing BAX-mediated apoptosis. This Mus musculus (Mouse) protein is SET domain-containing protein 4.